The chain runs to 379 residues: tRNA (guanine(26)-N(2))-dimethyltransferase (379 aa).

The 372-residue stretch at valine 4–leucine 375 folds into the Trm1 methyltransferase domain. Arginine 36, arginine 61, aspartate 78, aspartate 120, and alanine 121 together coordinate S-adenosyl-L-methionine.

This sequence belongs to the class I-like SAM-binding methyltransferase superfamily. Trm1 family.

It catalyses the reaction guanosine(26) in tRNA + 2 S-adenosyl-L-methionine = N(2)-dimethylguanosine(26) in tRNA + 2 S-adenosyl-L-homocysteine + 2 H(+). In terms of biological role, dimethylates a single guanine residue at position 26 of a number of tRNAs using S-adenosyl-L-methionine as donor of the methyl groups. The polypeptide is tRNA (guanine(26)-N(2))-dimethyltransferase (Pyrococcus abyssi (strain GE5 / Orsay)).